Consider the following 79-residue polypeptide: Defensin-like protein 3 (79 aa).

The signal sequence occupies residues 1 to 29 (MAKFASIITLLFAALVVFAAFEAPTMVEA). 4 cysteine pairs are disulfide-bonded: Cys-32/Cys-79, Cys-43/Cys-64, Cys-49/Cys-73, and Cys-53/Cys-75.

The protein belongs to the DEFL family.

The protein localises to the secreted. Its function is as follows. Possesses antifungal activity sensitive to inorganic cations. This chain is Defensin-like protein 3 (AFP3), found in Brassica napus (Rape).